Consider the following 284-residue polypeptide: 4-diphosphocytidyl-2-C-methyl-D-erythritol kinase (284 aa).

The active site involves Lys-14. Residue 98 to 108 (PMGGGLGGGSS) participates in ATP binding. Asp-140 is a catalytic residue.

It belongs to the GHMP kinase family. IspE subfamily.

The catalysed reaction is 4-CDP-2-C-methyl-D-erythritol + ATP = 4-CDP-2-C-methyl-D-erythritol 2-phosphate + ADP + H(+). It functions in the pathway isoprenoid biosynthesis; isopentenyl diphosphate biosynthesis via DXP pathway; isopentenyl diphosphate from 1-deoxy-D-xylulose 5-phosphate: step 3/6. Catalyzes the phosphorylation of the position 2 hydroxy group of 4-diphosphocytidyl-2C-methyl-D-erythritol. This Shewanella putrefaciens (strain CN-32 / ATCC BAA-453) protein is 4-diphosphocytidyl-2-C-methyl-D-erythritol kinase.